We begin with the raw amino-acid sequence, 887 residues long: Alanine--tRNA ligase (887 aa).

Zn(2+) is bound by residues His564, His568, Cys676, and His680.

The protein belongs to the class-II aminoacyl-tRNA synthetase family. The cofactor is Zn(2+).

It localises to the cytoplasm. It carries out the reaction tRNA(Ala) + L-alanine + ATP = L-alanyl-tRNA(Ala) + AMP + diphosphate. Functionally, catalyzes the attachment of alanine to tRNA(Ala) in a two-step reaction: alanine is first activated by ATP to form Ala-AMP and then transferred to the acceptor end of tRNA(Ala). Also edits incorrectly charged Ser-tRNA(Ala) and Gly-tRNA(Ala) via its editing domain. The sequence is that of Alanine--tRNA ligase from Agrobacterium fabrum (strain C58 / ATCC 33970) (Agrobacterium tumefaciens (strain C58)).